Here is a 129-residue protein sequence, read N- to C-terminus: M-zodatoxin-Lt8i (129 aa).

A signal peptide spans 1 to 20; the sequence is MKYFVVALALVAAFACIAES. Residues 21–60 constitute a propeptide that is removed on maturation; it reads KPAESEHELAEVEEENELADLEDAVWLEHLADLSDLEEAR.

The protein belongs to the cationic peptide 06 (cytoinsectotoxin) family. Expressed by the venom gland.

The protein localises to the secreted. In terms of biological role, insecticidal, cytolytic and antimicrobial peptide. Forms voltage-dependent, ion-permeable channels in membranes. At high concentration causes cell membrane lysis. This chain is M-zodatoxin-Lt8i (cit 1-6), found in Lachesana tarabaevi (Spider).